A 38-amino-acid polypeptide reads, in one-letter code: Large ribosomal subunit protein bL36 (38 aa).

It belongs to the bacterial ribosomal protein bL36 family.

The polypeptide is Large ribosomal subunit protein bL36 (Hahella chejuensis (strain KCTC 2396)).